Consider the following 376-residue polypeptide: Carbohydrate sulfotransferase 14 (376 aa).

Positions 1–30 (MFPRPLTPLAAPKSAETLGRTPRRAPLGRA) are disordered. Residues 1–39 (MFPRPLTPLAAPKSAETLGRTPRRAPLGRARAGLGGPPL) lie on the Cytoplasmic side of the membrane. The span at 18-30 (LGRTPRRAPLGRA) shows a compositional bias: low complexity. Residues 40-60 (LLPSMLMFAVIVASSGLLLMI) form a helical; Signal-anchor for type II membrane protein membrane-spanning segment. The Lumenal portion of the chain corresponds to 61–376 (ERGILSEMKP…PNVTKEACHQ (316 aa)). Residues 76–96 (PSHKGAAWSGTDPKPRGLSLD) form a disordered region. N-linked (GlcNAc...) asparagine glycosylation is present at asparagine 110. 3'-phosphoadenylyl sulfate-binding positions include 155–161 (PKVACSN) and 213–221 (RDPLERLLS). Asparagine 368 is a glycosylation site (N-linked (GlcNAc...) asparagine).

Belongs to the sulfotransferase 2 family.

It is found in the golgi apparatus membrane. It catalyses the reaction dermatan + n 3'-phosphoadenylyl sulfate = dermatan 4'-sulfate + n adenosine 3',5'-bisphosphate + n H(+). Its function is as follows. Catalyzes the transfer of sulfate to position 4 of the N-acetylgalactosamine (GalNAc) residue of dermatan sulfate. Plays a pivotal role in the formation of 4-0-sulfated IdoA blocks in dermatan sulfate. Transfers sulfate to the C-4 hydroxyl of beta1,4-linked GalNAc that is substituted with an alpha-linked iduronic acid (IdoUA) at the C-3 hydroxyl. Transfers sulfate more efficiently to GalNAc residues in -IdoUA-GalNAc-IdoUA- than in -GlcUA-GalNAc-GlcUA-sequences. Has preference for partially desulfated dermatan sulfate. Addition of sulfate to GalNAc may occur immediately after epimerization of GlcUA to IdoUA. Appears to have an important role in the formation of the cerebellar neural network during postnatal brain development. The sequence is that of Carbohydrate sulfotransferase 14 (Chst14) from Mus musculus (Mouse).